The primary structure comprises 180 residues: ATP synthase subunit delta (180 aa).

The protein belongs to the ATPase delta chain family. As to quaternary structure, F-type ATPases have 2 components, F(1) - the catalytic core - and F(0) - the membrane proton channel. F(1) has five subunits: alpha(3), beta(3), gamma(1), delta(1), epsilon(1). F(0) has three main subunits: a(1), b(2) and c(10-14). The alpha and beta chains form an alternating ring which encloses part of the gamma chain. F(1) is attached to F(0) by a central stalk formed by the gamma and epsilon chains, while a peripheral stalk is formed by the delta and b chains.

Its subcellular location is the cell membrane. In terms of biological role, f(1)F(0) ATP synthase produces ATP from ADP in the presence of a proton or sodium gradient. F-type ATPases consist of two structural domains, F(1) containing the extramembraneous catalytic core and F(0) containing the membrane proton channel, linked together by a central stalk and a peripheral stalk. During catalysis, ATP synthesis in the catalytic domain of F(1) is coupled via a rotary mechanism of the central stalk subunits to proton translocation. Functionally, this protein is part of the stalk that links CF(0) to CF(1). It either transmits conformational changes from CF(0) to CF(1) or is implicated in proton conduction. The protein is ATP synthase subunit delta of Bacillus cereus (strain G9842).